The primary structure comprises 481 residues: F-box protein At1g49360 (481 aa).

Residues 105 to 156 (LKEDLFLPSDLVRLILSRLSFKDNIRSSTVCKAWGDIAASVRVKSRRCWLLY) form the F-box domain.

The protein is F-box protein At1g49360 of Arabidopsis thaliana (Mouse-ear cress).